The chain runs to 342 residues: Keratin-associated protein 29-1 (342 aa).

Repeat copies occupy residues 5–9 (CCPEN), 91–95 (CCASD), 239–243 (CCVPP), 309–313 (CCVTG), and 324–328 (CCPPT). Positions 5 to 328 (CCPENPTAVP…SSGPGCCPPT (324 aa)) are 5 X 5 AA repeats of C-C-X(3).

It belongs to the KRTAP type 10 family.

The protein is Keratin-associated protein 29-1 (Krtap29-1) of Mus musculus (Mouse).